Consider the following 66-residue polypeptide: Large ribosomal subunit protein bL33c (66 aa).

Belongs to the bacterial ribosomal protein bL33 family.

Its subcellular location is the plastid. The protein localises to the chloroplast. This Ipomoea purpurea (Common morning glory) protein is Large ribosomal subunit protein bL33c.